The following is a 500-amino-acid chain: Recombining binding protein suppressor of hairless (500 aa).

Residues 1–30 (MDHTEGSPAEEPPAHAPSPGKFGERPPPKR) are disordered. 2 DNA-binding regions span residues 57 to 67 (QKSYGNEKRFF) and 165 to 170 (SKPSKK). Lys-175 is subject to N6-acetyllysine. The interval 192 to 197 (RLRSQT) is DNA-binding. Positions 355-445 (PVVESLQLNG…YSTSLTFTYT (91 aa)) constitute an IPT/TIG domain. Residues 465-481 (SSQVPPNESNTNSEGSY) show a composition bias toward polar residues. Residues 465–500 (SSQVPPNESNTNSEGSYTNASTNSTSVTSSTATVVS) form a disordered region. Over residues 482–500 (TNASTNSTSVTSSTATVVS) the composition is skewed to low complexity.

This sequence belongs to the Su(H) family. In terms of assembly, interacts with activated NOTCH1, NOTCH2 or NOTCH3. Interacts with MINT/SHARP. This interaction may mediate the recruitment of large corepressor complexes containing proteins such as HDAC1, HDAC2, NCOR2, SAP30, FHL1/KYOT2 and CIR1. Interacts with EP300, MAML1 and PTF1A. Interacts with RITA1/C12orf52, leading to nuclear export, prevent the interaction between RBPJ and NICD product and subsequent down-regulation of the Notch signaling pathway. Interacts with SNW1. Interacts with CHCHD2 and CXXC5. Interacts with BEND6 (via BEN domain). Interacts with NKAPL. Interacts with ZMIZ1. Interacts with RBM15. Interacts with L3MBTL3 and KDM1A; the interaction with KDM1A is weaker in the absence of L3MBTL3 and the interaction with L3MBTL3 is impaired by Notch-derived peptide containing the intracellular domain (NICD). As to quaternary structure, (Microbial infection) Interacts with EBV EBNA2. Interacts with EBV EBNA3. Interacts with EBV EBNA4. Interacts with EBV EBNA6 (via N-terminus).

Its subcellular location is the nucleus. It localises to the cytoplasm. Functionally, transcriptional regulator that plays a central role in Notch signaling, a signaling pathway involved in cell-cell communication that regulates a broad spectrum of cell-fate determinations. Acts as a transcriptional repressor when it is not associated with Notch proteins. When associated with some NICD product of Notch proteins (Notch intracellular domain), it acts as a transcriptional activator that activates transcription of Notch target genes. Probably represses or activates transcription via the recruitment of chromatin remodeling complexes containing histone deacetylase or histone acetylase proteins, respectively. Specifically binds to the immunoglobulin kappa-type J segment recombination signal sequence. Binds specifically to methylated DNA. Binds to the oxygen responsive element of COX4I2 and activates its transcription under hypoxia conditions (4% oxygen). Negatively regulates the phagocyte oxidative burst in response to bacterial infection by repressing transcription of NADPH oxidase subunits. The polypeptide is Recombining binding protein suppressor of hairless (Homo sapiens (Human)).